The sequence spans 191 residues: Molybdenum cofactor guanylyltransferase (191 aa).

GTP-binding positions include 13–15, Lys26, Asp72, and Asp102; that span reads LAG. Mg(2+) is bound at residue Asp102.

The protein belongs to the MobA family. Monomer. Mg(2+) is required as a cofactor.

Its subcellular location is the cytoplasm. It carries out the reaction Mo-molybdopterin + GTP + H(+) = Mo-molybdopterin guanine dinucleotide + diphosphate. Its function is as follows. Transfers a GMP moiety from GTP to Mo-molybdopterin (Mo-MPT) cofactor (Moco or molybdenum cofactor) to form Mo-molybdopterin guanine dinucleotide (Mo-MGD) cofactor. This chain is Molybdenum cofactor guanylyltransferase, found in Pseudomonas putida (Arthrobacter siderocapsulatus).